The chain runs to 317 residues: L-lactate dehydrogenase (317 aa).

Residues Val-17, Asp-38, Lys-43, Tyr-69, and 83-84 (GA) each bind NAD(+). Residues Gln-86 and Arg-92 each coordinate substrate. NAD(+) contacts are provided by residues Ser-105, 122 to 124 (ATN), and Ser-147. 124–127 (NPVD) provides a ligand contact to substrate. Position 152 to 155 (152 to 155 (DSAR)) interacts with substrate. Arg-157 and His-172 together coordinate beta-D-fructose 1,6-bisphosphate. His-179 functions as the Proton acceptor in the catalytic mechanism. Phosphotyrosine is present on Tyr-224. Thr-233 provides a ligand contact to substrate.

The protein belongs to the LDH/MDH superfamily. LDH family. Homotetramer.

It localises to the cytoplasm. It catalyses the reaction (S)-lactate + NAD(+) = pyruvate + NADH + H(+). It functions in the pathway fermentation; pyruvate fermentation to lactate; (S)-lactate from pyruvate: step 1/1. With respect to regulation, allosterically activated by fructose 1,6-bisphosphate (FBP). Catalyzes the conversion of lactate to pyruvate. The chain is L-lactate dehydrogenase from Bacillus velezensis (strain DSM 23117 / BGSC 10A6 / LMG 26770 / FZB42) (Bacillus amyloliquefaciens subsp. plantarum).